The following is a 541-amino-acid chain: Chaperonin GroEL 2 (541 aa).

ATP contacts are provided by residues 29–32, 86–90, Gly413, 478–480, and Asp494; these read TLGP, DGTTT, and NAA.

This sequence belongs to the chaperonin (HSP60) family. Forms a cylinder of 14 subunits composed of two heptameric rings stacked back-to-back. Interacts with the co-chaperonin GroES.

The protein localises to the cytoplasm. It carries out the reaction ATP + H2O + a folded polypeptide = ADP + phosphate + an unfolded polypeptide.. Its function is as follows. Together with its co-chaperonin GroES, plays an essential role in assisting protein folding. The GroEL-GroES system forms a nano-cage that allows encapsulation of the non-native substrate proteins and provides a physical environment optimized to promote and accelerate protein folding. In Corynebacterium jeikeium (strain K411), this protein is Chaperonin GroEL 2.